Reading from the N-terminus, the 285-residue chain is Phosphatidate cytidylyltransferase (285 aa).

Transmembrane regions (helical) follow at residues 10–30 (FVLIPVVIAALFLLPPVGFAI), 56–76 (VWLAVLCGLLLALMLFLLPEY), 93–113 (LGWWIVALLLVLFYPGSAAIW), 121–141 (LIFGVLTIVPFFWGMLALRAW), 151–171 (AIWLLYVMILVWGADSGAYMF), 190–210 (WQGFIGGLATAAVISWGYGMW), 213–233 (LDVAPVTLLICSIVAALASVL), and 264–284 (IDSLTAAVPVFACLLLLVFRT).

This sequence belongs to the CDS family.

The protein resides in the cell inner membrane. The enzyme catalyses a 1,2-diacyl-sn-glycero-3-phosphate + CTP + H(+) = a CDP-1,2-diacyl-sn-glycerol + diphosphate. It participates in phospholipid metabolism; CDP-diacylglycerol biosynthesis; CDP-diacylglycerol from sn-glycerol 3-phosphate: step 3/3. This is Phosphatidate cytidylyltransferase (cdsA) from Escherichia coli O157:H7.